We begin with the raw amino-acid sequence, 594 residues long: Pentatricopeptide repeat-containing protein At1g15480, mitochondrial (594 aa).

The transit peptide at 1 to 67 (MFALSKVLRR…WSSSTGRRSL (67 aa)) directs the protein to the mitochondrion. Residues 62–75 (TGRRSLSSDAGAKT) show a composition bias toward low complexity. A disordered region spans residues 62-109 (TGRRSLSSDAGAKTTGDDDDLEDKNVDLATPDETSSDSEDGEEFSGDE). A compositionally biased stretch (acidic residues) spans 95-109 (TSSDSEDGEEFSGDE). PPR repeat units follow at residues 226 to 260 (GELVYRTLLANHVATSNVRTAEAVFNKMKDLGFPL), 261 to 294 (STFTCNQMLILYKRVDKKKIADVLLLLEKENLKP), 295 to 329 (NLNTYKILIDTKGSSNDITGMEQIVETMKSEGVEL), 330 to 364 (DLRARALIARHYASAGLKEKAEKVLKEMEGESLEE), 432 to 466 (SSNVYSVLLRVYVDHKMVSEGKDLVKQMSDSGCNI), 467 to 502 (GALTWDAVIKLYVEAGEVEKAESSLSKAIQSKQIKP), and 503 to 537 (LMSSFMYLMHEYVRRGDVHNTEKIFQRMKQAGYQS).

It belongs to the PPR family. P subfamily.

It localises to the mitochondrion. In Arabidopsis thaliana (Mouse-ear cress), this protein is Pentatricopeptide repeat-containing protein At1g15480, mitochondrial.